The chain runs to 579 residues: Folliculin (579 aa).

The tract at residues 32–82 is disordered; that stretch reads GAGSGDGAGRGEPADEEEGGIQMSSRIRAHSPAEGASAESSSPGPKKSDMC. Phosphoserine occurs at positions 62 and 73. Over residues 63 to 76 the composition is skewed to low complexity; the sequence is PAEGASAESSSPGP. Residues 86–242 enclose the uDENN FLCN/SMCR8-type domain; sequence RSLAAGHPGY…RNGNAARSLT (157 aa). Positions 285 to 309 form a coiled coil; it reads QMEQLAELEEESESWDNSEAEEEEK. Over residues 294-308 the composition is skewed to acidic residues; it reads EESESWDNSEAEEEE. Positions 294 to 321 are disordered; that stretch reads EESESWDNSEAEEEEKGPALPEGAEGRE. A phosphoserine mark is found at Ser302, Ser406, Ser537, Ser542, and Ser571. The cDENN FLCN/SMCR8-type domain maps to 339–491; it reads QPRKLSVFKS…ILNKMEAALT (153 aa). In terms of domain architecture, dDENN FLCN/SMCR8-type spans 493 to 558; that stretch reads QNLSVDVVDQ…LLKFWMTGLS (66 aa).

The protein belongs to the folliculin family. Interacts (via C-terminus) with FNIP1 or FNIP2 (via C-terminus). Component of the lysosomal folliculin complex (LFC), composed of FLCN, FNIP1 (or FNIP2), RagA/RRAGA or RagB/RRAGB GDP-bound, RagC/RRAGC or RagD/RRAGD GTP-bound, and Ragulator. Interaction with FNIP1 or FNIP2 mediates indirect interaction with the PRKAA1, PRKAB1 and PRKAG1 subunits of 5'-AMP-activated protein kinase (AMPK). Interacts with HSP90AA1 in the presence of FNIP1. Interacts with HSP70, STUB1, CDC37, AHSA1, CCT2, STIP1, PTGES3 and PPP5C. Interacts with GABARAP; interaction takes place in the presence of FNIP1 and/or FNIP2. Interacts with RILP; the interaction is direct and promotes association between RILP and RAB34. Interacts with KIF3A and KIF3B. Interacts with lactate dehydrogenase LDHA, but not LDHB; the interaction is direct, may preferentially bind LDHA dimers rather than tetramers, and regulates LDHA activity, acting as an uncompetitive inhibitor. Phosphorylation by ULK1 modulates the interaction with GABARAP and is required to regulate autophagy.

The protein resides in the lysosome membrane. It localises to the cytoplasm. Its subcellular location is the cytosol. The protein localises to the cell projection. It is found in the cilium. The protein resides in the cytoskeleton. It localises to the microtubule organizing center. Its subcellular location is the centrosome. The protein localises to the spindle. It is found in the nucleus. With respect to regulation, GTPase-activating activity is inhibited in the folliculin complex (LFC), which stabilizes the GDP-bound state of RagA/RRAGA (or RagB/RRAGB), because Arg-164 is located far from the RagC/RRAGC or RagD/RRAGD nucleotide pocket. Disassembly of the LFC complex upon amino acid restimulation liberates the GTPase-activating activity. In terms of biological role, multi-functional protein, involved in both the cellular response to amino acid availability and in the regulation of glycolysis. GTPase-activating protein that plays a key role in the cellular response to amino acid availability through regulation of the non-canonical mTORC1 signaling cascade controlling the MiT/TFE factors TFEB and TFE3. Activates mTORC1 by acting as a GTPase-activating protein: specifically stimulates GTP hydrolysis by RagC/RRAGC or RagD/RRAGD, promoting the conversion to the GDP-bound state of RagC/RRAGC or RagD/RRAGD, and thereby activating the kinase activity of mTORC1. The GTPase-activating activity is inhibited during starvation and activated in presence of nutrients. Acts as a key component for non-canonical mTORC1-dependent control of the MiT/TFE factors TFEB and TFE3, while it is not involved in mTORC1-dependent phosphorylation of canonical RPS6KB1/S6K1 and EIF4EBP1/4E-BP1. In low-amino acid conditions, the lysosomal folliculin complex (LFC) is formed on the membrane of lysosomes, which inhibits the GTPase-activating activity of FLCN, inactivates mTORC1 and maximizes nuclear translocation of TFEB and TFE3. Upon amino acid restimulation, RagA/RRAGA (or RagB/RRAGB) nucleotide exchange promotes disassembly of the LFC complex and liberates the GTPase-activating activity of FLCN, leading to activation of mTORC1 and subsequent cytoplasmic retention of TFEB and TFE3. Indirectly acts as a positive regulator of Wnt signaling by promoting mTOR-dependent cytoplasmic retention of MiT/TFE factor TFE3. Required for the exit of hematopoietic stem cell from pluripotency by promoting mTOR-dependent cytoplasmic retention of TFE3, thereby increasing Wnt signaling. Involved in the control of embryonic stem cells differentiation; together with LAMTOR1 it is necessary to recruit and activate RagC/RRAGC and RagD/RRAGD at the lysosomes, and to induce exit of embryonic stem cells from pluripotency via non-canonical, mTOR-independent TFE3 inactivation. Acts as an inhibitor of browning of adipose tissue by regulating mTOR-dependent cytoplasmic retention of TFE3. In response to flow stress, regulates STK11/LKB1 accumulation and mTORC1 activation through primary cilia: may act by recruiting STK11/LKB1 to primary cilia for activation of AMPK resided at basal bodies, causing mTORC1 down-regulation. Together with FNIP1 and/or FNIP2, regulates autophagy: following phosphorylation by ULK1, interacts with GABARAP and promotes autophagy. Required for starvation-induced perinuclear clustering of lysosomes by promoting association of RILP with its effector RAB34. Regulates glycolysis by binding to lactate dehydrogenase LDHA, acting as an uncompetitive inhibitor. This chain is Folliculin, found in Bos taurus (Bovine).